Consider the following 89-residue polypeptide: Large ribosomal subunit protein eL34 (89 aa).

The disordered stretch occupies residues 1-29 (MSAPRFRNGTFKRTLKRVPGGRKVEHYKK). Over residues 13-29 (RTLKRVPGGRKVEHYKK) the composition is skewed to basic residues.

It belongs to the eukaryotic ribosomal protein eL34 family.

This chain is Large ribosomal subunit protein eL34, found in Methanosphaera stadtmanae (strain ATCC 43021 / DSM 3091 / JCM 11832 / MCB-3).